The chain runs to 231 residues: 5'-methylthioadenosine/S-adenosylhomocysteine nucleosidase (231 aa).

Residue E12 is the Proton acceptor of the active site. Residues G78, V153, and 174–175 each bind substrate; that span reads ME. Catalysis depends on D198, which acts as the Proton donor.

This sequence belongs to the PNP/UDP phosphorylase family. MtnN subfamily.

The catalysed reaction is S-adenosyl-L-homocysteine + H2O = S-(5-deoxy-D-ribos-5-yl)-L-homocysteine + adenine. It catalyses the reaction S-methyl-5'-thioadenosine + H2O = 5-(methylsulfanyl)-D-ribose + adenine. The enzyme catalyses 5'-deoxyadenosine + H2O = 5-deoxy-D-ribose + adenine. The protein operates within amino-acid biosynthesis; L-methionine biosynthesis via salvage pathway; S-methyl-5-thio-alpha-D-ribose 1-phosphate from S-methyl-5'-thioadenosine (hydrolase route): step 1/2. Its function is as follows. Catalyzes the irreversible cleavage of the glycosidic bond in both 5'-methylthioadenosine (MTA) and S-adenosylhomocysteine (SAH/AdoHcy) to adenine and the corresponding thioribose, 5'-methylthioribose and S-ribosylhomocysteine, respectively. Also cleaves 5'-deoxyadenosine, a toxic by-product of radical S-adenosylmethionine (SAM) enzymes, into 5-deoxyribose and adenine. The sequence is that of 5'-methylthioadenosine/S-adenosylhomocysteine nucleosidase from Vibrio cholerae serotype O1 (strain ATCC 39315 / El Tor Inaba N16961).